The sequence spans 347 residues: G-protein coupled receptor homolog U12 (347 aa).

Transmembrane regions (helical) follow at residues 36-56 (GITLTTSIPMIIIVVTTMILY), 67-87 (FYVITLFASDFVLMWCVFFMT), 103-124 (LVYFIYHAVCSYSISMLAIIAT), 147-167 (IGILLLASSMCAIPTALFVKT), 194-214 (IVFSFIWGVLPTMVFSFFYVI), and 236-256 (ILLLSFLLIQIPYIAILICEI). Cys-101 and Cys-176 are disulfide-bonded. Residues 321–347 (QKRKDSDASEHDQNSKSKASVEKNQPL) form a disordered region. Basic and acidic residues predominate over residues 322-341 (KRKDSDASEHDQNSKSKASV).

It belongs to the G-protein coupled receptor 1 family.

It is found in the membrane. Functionally, probable G-protein coupled receptor. This is G-protein coupled receptor homolog U12 (U12) from Homo sapiens (Human).